Here is a 493-residue protein sequence, read N- to C-terminus: Glutamyl-tRNA(Gln) amidotransferase subunit A (493 aa).

Residues lysine 79 and serine 159 each act as charge relay system in the active site. The Acyl-ester intermediate role is filled by serine 183.

Belongs to the amidase family. GatA subfamily. As to quaternary structure, heterotrimer of A, B and C subunits.

The enzyme catalyses L-glutamyl-tRNA(Gln) + L-glutamine + ATP + H2O = L-glutaminyl-tRNA(Gln) + L-glutamate + ADP + phosphate + H(+). Allows the formation of correctly charged Gln-tRNA(Gln) through the transamidation of misacylated Glu-tRNA(Gln) in organisms which lack glutaminyl-tRNA synthetase. The reaction takes place in the presence of glutamine and ATP through an activated gamma-phospho-Glu-tRNA(Gln). This Rhizobium johnstonii (strain DSM 114642 / LMG 32736 / 3841) (Rhizobium leguminosarum bv. viciae) protein is Glutamyl-tRNA(Gln) amidotransferase subunit A.